We begin with the raw amino-acid sequence, 715 residues long: Methionine--tRNA ligase (715 aa).

A 'HIGH' region motif is present at residues 17–27; sequence PYANGPIHLGH. Residues cysteine 148, cysteine 151, cysteine 161, and cysteine 164 each coordinate Zn(2+). The short motif at 359 to 363 is the 'KMSKS' region element; that stretch reads KMSKS. Lysine 362 is a binding site for ATP. A tRNA-binding domain is found at 614 to 715; sequence DLSKVELRVG…KDAKPGDRLK (102 aa).

The protein belongs to the class-I aminoacyl-tRNA synthetase family. MetG type 1 subfamily. In terms of assembly, homodimer. Zn(2+) is required as a cofactor.

The protein resides in the cytoplasm. It catalyses the reaction tRNA(Met) + L-methionine + ATP = L-methionyl-tRNA(Met) + AMP + diphosphate. Functionally, is required not only for elongation of protein synthesis but also for the initiation of all mRNA translation through initiator tRNA(fMet) aminoacylation. The sequence is that of Methionine--tRNA ligase from Leptospira interrogans serogroup Icterohaemorrhagiae serovar copenhageni (strain Fiocruz L1-130).